The chain runs to 405 residues: L-rhamnonate dehydratase (405 aa).

Positions 33 and 59 each coordinate substrate. Mg(2+) contacts are provided by D226, E252, and E280. The active-site Proton acceptor is the H329. Residue E349 participates in substrate binding.

This sequence belongs to the mandelate racemase/muconate lactonizing enzyme family. RhamD subfamily. As to quaternary structure, homooctamer; tetramer of dimers. Mg(2+) is required as a cofactor.

It catalyses the reaction L-rhamnonate = 2-dehydro-3-deoxy-L-rhamnonate + H2O. In terms of biological role, catalyzes the dehydration of L-rhamnonate to 2-keto-3-deoxy-L-rhamnonate (KDR). The polypeptide is L-rhamnonate dehydratase (Escherichia coli (strain SMS-3-5 / SECEC)).